Consider the following 213-residue polypeptide: dITP/XTP pyrophosphatase (213 aa).

17-22 (SNNAGK) is a binding site for substrate. Residues E49 and D78 each contribute to the Mg(2+) site. Catalysis depends on D78, which acts as the Proton acceptor. Substrate-binding positions include S79, 164–167 (FGYD), K187, and 192–193 (HR).

Belongs to the HAM1 NTPase family. Homodimer. The cofactor is Mg(2+).

The catalysed reaction is XTP + H2O = XMP + diphosphate + H(+). It catalyses the reaction dITP + H2O = dIMP + diphosphate + H(+). It carries out the reaction ITP + H2O = IMP + diphosphate + H(+). Pyrophosphatase that catalyzes the hydrolysis of nucleoside triphosphates to their monophosphate derivatives, with a high preference for the non-canonical purine nucleotides XTP (xanthosine triphosphate), dITP (deoxyinosine triphosphate) and ITP. Seems to function as a house-cleaning enzyme that removes non-canonical purine nucleotides from the nucleotide pool, thus preventing their incorporation into DNA/RNA and avoiding chromosomal lesions. The sequence is that of dITP/XTP pyrophosphatase from Bordetella bronchiseptica (strain ATCC BAA-588 / NCTC 13252 / RB50) (Alcaligenes bronchisepticus).